A 211-amino-acid chain; its full sequence is Large ribosomal subunit protein bL17c (211 aa).

The transit peptide at 1 to 95 (MAIPMSMAMA…IVDGGGRIYA (95 aa)) directs the protein to the chloroplast.

This sequence belongs to the bacterial ribosomal protein bL17 family. In terms of assembly, part of the 50S ribosomal subunit.

It localises to the plastid. The protein resides in the chloroplast. This protein binds directly to 23S ribosomal RNA. The chain is Large ribosomal subunit protein bL17c (RPL17) from Arabidopsis thaliana (Mouse-ear cress).